A 115-amino-acid polypeptide reads, in one-letter code: U3-lycotoxin-Ls1a (115 aa).

The signal sequence occupies residues 1–20 (MKFVLLFGVLLVTLFSYSSA). Residues 21-44 (EMLDDFDQAVEDELLSLIEKEEAR) constitute a propeptide that is removed on maturation. Disulfide bonds link cysteine 48/cysteine 63, cysteine 55/cysteine 72, cysteine 62/cysteine 87, and cysteine 74/cysteine 85.

This sequence belongs to the neurotoxin 19 (CSTX) family. 01 subfamily. Expressed by the venom gland.

It is found in the secreted. In Lycosa singoriensis (Wolf spider), this protein is U3-lycotoxin-Ls1a.